The following is a 381-amino-acid chain: Anti-sigma-I factor RsgI (381 aa).

The Cytoplasmic segment spans residues methionine 1–lysine 63. Residues arginine 2 to arginine 50 form the RsgI N-terminal anti-sigma domain. Residues methionine 64 to serine 84 traverse the membrane as a helical segment. Residues asparagine 85–glutamate 381 are Extracellular-facing. The segment at serine 198–glutamate 381 is disordered. Composition is skewed to basic and acidic residues over residues methionine 200–glycine 210, serine 219–aspartate 244, glycine 273–asparagine 321, and serine 349–asparagine 359.

Interacts (via RsgI N-terminal anti-sigma domain) with SigI.

The protein resides in the cell membrane. In terms of biological role, anti-sigma factor for SigI. Negatively regulates SigI activity through direct interaction. This chain is Anti-sigma-I factor RsgI, found in Bacillus subtilis (strain 168).